The following is a 53-amino-acid chain: Membrane antigen containing repeating peptides (53 aa).

Tandem repeats lie at residues 1 to 10, 11 to 20, 21 to 30, 31 to 40, 41 to 50, and 51 to 53. Residues 1-53 are 6 X 10 AA tandem repeats; sequence EAEEAARLQAEAEEAARQQAEAEEAARLQAEAEEAARLQAEAEEAARLQAEAE. Residues 1–53 are disordered; it reads EAEEAARLQAEAEEAARQQAEAEEAARLQAEAEEAARLQAEAEEAARLQAEAE.

It localises to the membrane. The polypeptide is Membrane antigen containing repeating peptides (Leishmania major).